The chain runs to 1561 residues: Adhesion G protein-coupled receptor B2 (1561 aa).

The first 20 residues, 1 to 20, serve as a signal peptide directing secretion; that stretch reads MTPACPLLLSVILSLRLATA. Residues 21 to 930 are Extracellular-facing; the sequence is FDPAPSACSA…ELAGAPSVPL (910 aa). Residues N94, N182, and N183 are each glycosylated (N-linked (GlcNAc...) asparagine). A glycan (O-linked (Xyl...) (chondroitin sulfate) serine) is linked at S257. TSP type-1 domains are found at residues 300-353, 355-408, 410-463, and 466-519; these read DPAA…ATCP, HGVW…AACP, EGQW…LDCP, and DGKW…KRCP. Cystine bridges form between C312/C346, C316/C352, C327/C336, C367/C402, C371/C407, C382/C392, C422/C457, C426/C462, C437/C447, C478/C513, C482/C518, C493/C503, C525/C560, and C548/C578. The N-linked (GlcNAc...) asparagine glycan is linked to N347. An N-linked (GlcNAc...) asparagine glycan is attached at N428. N-linked (GlcNAc...) asparagine glycosylation is found at N551 and N636. Residues 748 to 918 enclose the GAIN-B domain; that stretch reads DRLFLPKEVL…AVLAQPPKDL (171 aa). The interval 757–797 is disordered; sequence LSLSSPGKPATPGAATAGSPGRGRGPGTVPPGPGHAHQRLL. Over residues 760–775 the composition is skewed to low complexity; the sequence is SSPGKPATPGAATAGS. A glycan (N-linked (GlcNAc...) asparagine) is linked at N861. Intrachain disulfides connect C868-C900 and C888-C902. Residues 868–918 form a GPS region; it reads CASWDYSRADTNSGDWNTESCQTLETQAAHTRCQCQHLSTFAVLAQPPKDL. Residues 931-951 traverse the membrane as a helical segment; it reads VIGCAVSCMALLTLLAIYAAF. Topologically, residues 952 to 959 are cytoplasmic; it reads WRFIKSER. A helical transmembrane segment spans residues 960 to 980; it reads SIILLNFCLSILASNILILVG. Residues 981–988 lie on the Extracellular side of the membrane; it reads QSRVLSKG. A helical membrane pass occupies residues 989–1009; it reads VCTMTAAFLHFFFLSSFCWVL. At 1010 to 1030 the chain is on the cytoplasmic side; the sequence is TEAWQSYLAVIGRMRTRLVRK. A helical membrane pass occupies residues 1031-1051; it reads RFLCLGWGLPALVVAVSVGFT. At 1052 to 1072 the chain is on the extracellular side; sequence RTKGYGTSSYCWLSLEGGLLY. Residues 1073–1093 traverse the membrane as a helical segment; the sequence is AFVGPAAVIVLVNMLIGIIVF. Topologically, residues 1094–1115 are cytoplasmic; it reads NKLMARDGVSDKSKKQRAGSER. The chain crosses the membrane as a helical span at residues 1116–1136; that stretch reads CPWASLLLPCSACGAVPSPLL. The Extracellular segment spans residues 1137–1147; sequence SSASARNAMAS. A helical membrane pass occupies residues 1148-1168; sequence LWSSCVVLPLLALTWMSAVLA. Over 1169–1561 the chain is Cytoplasmic; the sequence is MTDRRSVLFQ…PPDGDFQTEV (393 aa). The residue at position 1345 (Y1345) is a Phosphotyrosine. Disordered stretches follow at residues 1355–1377, 1417–1447, and 1491–1561; these read LQPGGGGTAGEEAPRARPEGTPR, FQPPPPTPSARQVPEPGERSRTMPRTVPGST, and RYRS…QTEV. Basic and acidic residues predominate over residues 1366–1376; sequence EAPRARPEGTP. Basic and acidic residues predominate over residues 1491–1502; the sequence is RYRSQSSAKEKP. A compositionally biased stretch (polar residues) spans 1519 to 1528; the sequence is SWSTFKSMTL. Acidic residues predominate over residues 1551-1561; it reads EPPDGDFQTEV.

Belongs to the G-protein coupled receptor 2 family. Adhesion G-protein coupled receptor (ADGR) subfamily. As to quaternary structure, heterodimer of 2 chains generated by proteolytic processing; the large extracellular N-terminal fragment and the membrane-bound C-terminal fragment predominantly remain associated and non-covalently linked. Interacts with GABPB2. Interacts (via carboxy-terminus) with TAX1BP3. Interacts with GNAZ. Interacts with SH3GL2. Post-translationally, glycosylated. Autoproteolytically processed at the GPS region of the GAIN-B domain; this cleavage modulates receptor activity. Additionally, furin is involved in the cleavage at another site, in the middle of the extracellular domain, generating a soluble fragment. As to expression, specifically expressed in the brain. The peak level in the brain is observed 10 days after birth.

It is found in the cell membrane. It localises to the secreted. Receptor activity is regulated by proteolytic processing. The long N-terminal has a an inhibitory effect on the constitutive signaling activity. Removal of the N-terminal region induces an increase of the receptor activity. Its function is as follows. Orphan G-protein coupled receptor involved in cell adhesion and probably in cell-cell interactions. Activates NFAT-signaling pathway, a transcription factor, via the G-protein GNAZ. Involved in angiogenesis inhibition. This chain is Adhesion G protein-coupled receptor B2 (Adgrb2), found in Mus musculus (Mouse).